The following is a 99-amino-acid chain: Large ribosomal subunit protein bL21 (99 aa).

This sequence belongs to the bacterial ribosomal protein bL21 family. As to quaternary structure, part of the 50S ribosomal subunit. Contacts protein L20.

This protein binds to 23S rRNA in the presence of protein L20. The chain is Large ribosomal subunit protein bL21 from Mesomycoplasma hyopneumoniae (strain 232) (Mycoplasma hyopneumoniae).